Consider the following 207-residue polypeptide: dTTP/UTP pyrophosphatase (207 aa).

The active-site Proton acceptor is the D87.

The protein belongs to the Maf family. YhdE subfamily. The cofactor is a divalent metal cation.

Its subcellular location is the cytoplasm. The catalysed reaction is dTTP + H2O = dTMP + diphosphate + H(+). It catalyses the reaction UTP + H2O = UMP + diphosphate + H(+). Nucleoside triphosphate pyrophosphatase that hydrolyzes dTTP and UTP. May have a dual role in cell division arrest and in preventing the incorporation of modified nucleotides into cellular nucleic acids. The protein is dTTP/UTP pyrophosphatase of Bordetella bronchiseptica (strain ATCC BAA-588 / NCTC 13252 / RB50) (Alcaligenes bronchisepticus).